The sequence spans 317 residues: tRNA dimethylallyltransferase (317 aa).

Residue 19-26 coordinates ATP; that stretch reads GPTASGKS. Substrate is bound at residue 21 to 26; it reads TASGKS. Positions 49–52 are interaction with substrate tRNA; that stretch reads DSAQ.

This sequence belongs to the IPP transferase family. Monomer. Mg(2+) is required as a cofactor.

The catalysed reaction is adenosine(37) in tRNA + dimethylallyl diphosphate = N(6)-dimethylallyladenosine(37) in tRNA + diphosphate. Its function is as follows. Catalyzes the transfer of a dimethylallyl group onto the adenine at position 37 in tRNAs that read codons beginning with uridine, leading to the formation of N6-(dimethylallyl)adenosine (i(6)A). The sequence is that of tRNA dimethylallyltransferase from Erythrobacter litoralis (strain HTCC2594).